Reading from the N-terminus, the 907-residue chain is Cytochrome b561, DM13 and DOMON domain-containing protein At5g54830 (907 aa).

The signal sequence occupies residues 1 to 24 (MCDQRPNLLGSLVLLGFFIFFVNG). The 109-residue stretch at 31–139 (SSLIGHESEF…ASDFGHVLLS (109 aa)) folds into the DM13 domain. The disordered stretch occupies residues 144 to 172 (SDTSKAESPPSESNDVAPGKSNNSEPFKA). Positions 153–168 (PSESNDVAPGKSNNSE) are enriched in polar residues. 2 consecutive DOMON domains span residues 184 to 329 (DKYR…WALG) and 524 to 645 (QQVK…WAMG). The Cytochrome b561 domain maps to 653–850 (LTERNMHSVT…CVVTVAYLEY (198 aa)). Residues 685–705 (VLGVHGFMMFLAWGILLPGGI) form a helical membrane-spanning segment. Residues His689 and His723 each contribute to the heme b site. 4 consecutive transmembrane segments (helical) span residues 730-750 (GLAIVFLGLLFAVAELNGFSF), 754-774 (HVKFGFTAIVLACAQPVNAWL), 795-815 (SHSIVGQSAVVVGVVALFTGM), and 829-849 (GLNLALGLWVFLCVVTVAYLE). Heme b-binding residues include His754 and His796. Basic and acidic residues predominate over residues 884-897 (GGFRDKDDEDRNGG). Positions 884–907 (GGFRDKDDEDRNGGRMEIQLEPLK) are disordered.

The cofactor is heme b.

The protein localises to the membrane. Functionally, may act as a catecholamine-responsive trans-membrane electron transporter. This is Cytochrome b561, DM13 and DOMON domain-containing protein At5g54830 from Arabidopsis thaliana (Mouse-ear cress).